A 341-amino-acid polypeptide reads, in one-letter code: Protein MENT (341 aa).

The signal sequence occupies residues Met-1–Ala-23. Positions Ala-115–Pro-196 are disordered. Residues Ala-127–Pro-155 are compositionally biased toward polar residues.

In terms of processing, phosphorylation sites are present in the extracellular medium. Plasma. Overexpressed in lymphomas.

Its subcellular location is the secreted. Involved in control of cellular proliferation. Onconcogenic modifier contributing to the tumor suppressor function of DNMT3B. The polypeptide is Protein MENT (MENT) (Homo sapiens (Human)).